The primary structure comprises 79 residues: Large ribosomal subunit protein bL31 (79 aa).

Belongs to the bacterial ribosomal protein bL31 family. Type A subfamily. Part of the 50S ribosomal subunit.

Its function is as follows. Binds the 23S rRNA. The chain is Large ribosomal subunit protein bL31 from Synechococcus sp. (strain CC9902).